The primary structure comprises 259 residues: uncharacterized protein (259 aa).

It belongs to the BtpA family.

This is an uncharacterized protein from Pyrococcus abyssi (strain GE5 / Orsay).